The chain runs to 461 residues: MGKEKIHINIVVIGHVDSGKSTTTGHLIYKCGGIDKRTIEKFEKEAAEMGKGSFKYAWVLDKLKAERERGITIDISLWKFETGKFYITIIDAPGHRDFIKNMITGTSQADCAVLIVAGGVGEFEAGISKNGQTREHALLAFTLGVKQLIIGVNKMDSTEPPFSQKRFEEITKEVSAYIKKIGYNPATVPFVPISGWHGDNMLEASTNMPWFKGWKIERKEGNASGVTLLEALDCIIPPQRPTAKPLRLPLQDVYKIGGIGTVPVGRVETGVLKPGMIVTFAPSNVTTEVKSVEMHHEALQEALPGDNVGFNVKNISVKDIRRGNVAGDSKNDPPMQAGSFTAQVIILNHPGQISAGYAPVLDCHTAHIACKFAELKQKIDRRSGKKLEDDPKFLKSGDAAIVEMIPGKPMCVESFSDYPPLGRFAVRDMRQTVAVGVIKGVDKKAASSGKVTKSAVKAGKK.

Residue Gly-2 is modified to N,N,N-trimethylglycine. A tr-type G domain is found at 5 to 242 (KIHINIVVIG…DCIIPPQRPT (238 aa)). The segment at 14-21 (GHVDSGKS) is G1. Residue 14–21 (GHVDSGKS) participates in GTP binding. Residues 70–74 (GITID) are G2. Positions 91-94 (DAPG) are G3. Residues 91 to 95 (DAPGH) and 153 to 156 (NKMD) contribute to the GTP site. A G4 region spans residues 153–156 (NKMD). Residues 194–196 (SGW) are G5. Glu-301 and Glu-374 each carry 5-glutamyl glycerylphosphorylethanolamine.

The protein belongs to the TRAFAC class translation factor GTPase superfamily. Classic translation factor GTPase family. EF-Tu/EF-1A subfamily. In terms of tissue distribution, oocyte.

The protein localises to the cytoplasm. Its function is as follows. This protein promotes the GTP-dependent binding of aminoacyl-tRNA to the A-site of ribosomes during protein biosynthesis. The polypeptide is Elongation factor 1-alpha, oocyte form (eef1ao) (Xenopus laevis (African clawed frog)).